The sequence spans 285 residues: Probable endonuclease 4 (285 aa).

9 residues coordinate Zn(2+): His-69, His-109, Glu-145, Asp-179, His-182, His-216, Asp-229, His-231, and Glu-261.

This sequence belongs to the AP endonuclease 2 family. The cofactor is Zn(2+).

The enzyme catalyses Endonucleolytic cleavage to 5'-phosphooligonucleotide end-products.. In terms of biological role, endonuclease IV plays a role in DNA repair. It cleaves phosphodiester bonds at apurinic or apyrimidinic (AP) sites, generating a 3'-hydroxyl group and a 5'-terminal sugar phosphate. The protein is Probable endonuclease 4 of Shigella flexneri serotype 5b (strain 8401).